The primary structure comprises 305 residues: Ribose import binding protein RbsB (305 aa).

The first 18 residues, 1–18 (MKKAVSVILTLSLFLLTA), serve as a signal peptide directing secretion. The N-palmitoyl cysteine moiety is linked to residue Cys-19. Cys-19 carries the S-diacylglycerol cysteine lipid modification.

This sequence belongs to the bacterial solute-binding protein 2 family. In terms of assembly, the complex is composed of an ATP-binding protein (RbsA), two transmembrane proteins (RbsC) and a solute-binding protein (RbsB). Interacts with FloT.

Its subcellular location is the cell membrane. It is found in the membrane raft. Functionally, part of the ABC transporter complex RbsABC involved in ribose import. Binds ribose. The polypeptide is Ribose import binding protein RbsB (rbsB) (Bacillus subtilis (strain 168)).